We begin with the raw amino-acid sequence, 510 residues long: Pre-glycoprotein polyprotein GP complex (510 aa).

Residue Gly2 is the site of N-myristoyl glycine; by host attachment. The Extracellular segment spans residues 2 to 17 (GQFITLMQSIPEALNM). A helical transmembrane segment spans residues 18 to 32 (AFNVALVIVSLLCVT). A topological domain (cytoplasmic) is located at residue Lys33. Residues 34–53 (GLINLWKCGIIQLLMFLALA) form a helical membrane-spanning segment. Extracellular-facing segments span residues 54-58 (GRSCD) and 59-448 (GEYK…ALAD). Cys57 lines the Zn(2+) pocket. N-linked (GlcNAc...) asparagine; by host glycans are attached at residues Asn75, Asn90, Asn101, Asn112, Asn117, Asn122, Asn133, Asn182, Asn218, and Asn243. Disulfide bonds link Cys87–Cys250, Cys295–Cys308, Cys317–Cys326, and Cys380–Cys401. Residues Asn381, Asn389, Asn406, and Asn411 are each glycosylated (N-linked (GlcNAc...) asparagine; by host). A helical membrane pass occupies residues 449–469 (LCFWSLVFFTTTVFFQLIGIP). The Cytoplasmic segment spans residues 470–510 (THRHLIGEGCPKPHRLTSNSLCSCGFYKIPKKPFRWVRKGK). Residues His471, His473, Cys479, His483, Cys491, and Cys493 each contribute to the Zn(2+) site.

It belongs to the arenaviridae GPC protein family. In terms of assembly, homotetramer; disulfide-linked. Homotetramer. GP2 homotetramers bind through ionic interactions with GP1 homotetramers to form the GP complex together with the stable signal peptide. The GP-C polyprotein interacts with the host protease MBTPS1/SKI-1 resulting in the polyprotein processing. In terms of processing, specific enzymatic cleavages in vivo yield mature proteins. GP-C polyprotein is cleaved in the endoplasmic reticulum by the host protease MBTPS1. Only cleaved glycoprotein is incorporated into virions. The SSP remains stably associated with the GP complex following cleavage by signal peptidase and plays crucial roles in the trafficking of GP through the secretory pathway. Post-translationally, myristoylation is necessary for GP2-mediated fusion activity.

Its subcellular location is the virion membrane. The protein resides in the host endoplasmic reticulum membrane. It is found in the host Golgi apparatus membrane. The protein localises to the host cell membrane. Functionally, class I viral fusion protein that directs fusion of viral and host endosomal membranes, leading to delivery of the nucleocapsid into the cytoplasm. Membrane fusion is mediated by irreversible conformational changes induced upon acidification in the endosome. Its function is as follows. Stable signal peptide (SSP): cleaved and functions as a signal peptide. In addition, it is also retained as the third component of the GP complex. The SSP is required for efficient glycoprotein expression, post-translational maturation cleavage of GP1 and GP2, glycoprotein transport to the cell surface plasma membrane, formation of infectious virus particles, and acid pH-dependent glycoprotein-mediated cell fusion. Interacts with the host receptor. In Pirital mammarenavirus (isolate Rat/Venezuela/VAV-488/1995) (PIRV), this protein is Pre-glycoprotein polyprotein GP complex.